The sequence spans 43 residues: CLCNSDGPSVRGNTLSGILWLAGCPSGWHNCKKHKPTIGWCCK.

Disulfide bonds link C1–C41, C3–C31, and C24–C42.

The protein resides in the secreted. The protein localises to the nematocyst. In terms of biological role, binds specifically to voltage-gated sodium channels (Nav), thereby delaying their inactivation during signal transduction. Thus it strongly stimulates mammalian cardiac muscle contraction. In Bunodosoma capense (Knobbly sea anemone), this protein is Delta-actitoxin-Bca1a.